A 327-amino-acid chain; its full sequence is Auxin-responsive protein IAA18 (327 aa).

Disordered stretches follow at residues 26 to 45 (VKEADGEGSRNTNLDADEDK), 52 to 98 (GLPG…IGTT), and 180 to 202 (NLTNGSSFKQSPERQNDEADDKA). The EAR-like (transcriptional repression) signature appears at 49–53 (LKLGL). The span at 58–69 (QEERAADSREKI) shows a compositional bias: basic and acidic residues. A compositionally biased stretch (low complexity) spans 70–82 (QQQQRESSSEPSI). Polar residues predominate over residues 180–189 (NLTNGSSFKQ). Over residues 190 to 202 (SPERQNDEADDKA) the composition is skewed to basic and acidic residues. Residues 209 to 313 (RPLVKINMDG…TVKRLRVMRR (105 aa)) enclose the PB1 domain.

It belongs to the Aux/IAA family. Homodimers and heterodimers. In terms of tissue distribution, highly expressed in flowers. Expressed in roots and etiolated seedlings.

The protein resides in the nucleus. Functionally, aux/IAA proteins are short-lived transcriptional factors that function as repressors of early auxin response genes at low auxin concentrations. In Oryza sativa subsp. japonica (Rice), this protein is Auxin-responsive protein IAA18 (IAA18).